A 41-amino-acid polypeptide reads, in one-letter code: Peptide Hact-SCRiP1 (41 aa).

Disulfide bonds link Cys5/Cys37, Cys12/Cys31, Cys19/Cys38, and Cys26/Cys39.

In terms of tissue distribution, expressed in tentacles.

It is found in the nematocyst. The protein localises to the secreted. Functionally, peptide with unknown function. Does not exhibit any effect on human ion channel TRPV1 in a Xenopus laevis oocytes assay. The polypeptide is Peptide Hact-SCRiP1 (Heliofungia actiniformis (Mushroom coral)).